The chain runs to 224 residues: Cytidylate kinase (224 aa).

Residue G11–T19 coordinates ATP.

It belongs to the cytidylate kinase family. Type 1 subfamily.

The protein resides in the cytoplasm. The enzyme catalyses CMP + ATP = CDP + ADP. It carries out the reaction dCMP + ATP = dCDP + ADP. The protein is Cytidylate kinase of Geobacillus sp. (strain WCH70).